The chain runs to 543 residues: Allantoate permease (543 aa).

Topologically, residues 1-80 are cytoplasmic; the sequence is MSADASTNSN…PEEDRKLRWK (80 aa). The chain crosses the membrane as a helical span at residues 81–97; it reads IDYCMFPLMCILYAVQF. Residues 98–123 lie on the Extracellular side of the membrane; it reads MDKISTSSAAVMGLRTDLKMHGDQYS. Residues 124–145 traverse the membrane as a helical segment; the sequence is WVTSAFYFGYLFMNLGPVQFIF. The Cytoplasmic portion of the chain corresponds to 146-154; sequence QRTSHMSKM. The chain crosses the membrane as a helical span at residues 155–171; it reads LAVFIVIWGMLLALHAA. Residues 172-178 lie on the Extracellular side of the membrane; sequence PTVKYPS. The chain crosses the membrane as a helical span at residues 179-200; the sequence is FIVLRVLLGCAESVVTPCFTII. Topologically, residues 201 to 213 are cytoplasmic; the sequence is TAQYWKTEEQFTR. The chain crosses the membrane as a helical span at residues 214-237; it reads VSIWFGMNGLGSILINAIAYGVYI. Over 238 to 248 the chain is Extracellular; it reads HQDSYAIKGWR. A helical membrane pass occupies residues 249 to 269; that stretch reads TLFVITGVITIFIGILIFLWI. The Cytoplasmic portion of the chain corresponds to 270 to 317; that stretch reads PDDPSKARFLSKREKLMVVQRIRSNQQGFGNHEIKKYQIIEALKDVRT. A helical transmembrane segment spans residues 318–342; it reads WLYFLFTVSSNIPNGGISSFMSILL. Over 343–352 the chain is Extracellular; that stretch reads NSDFGYSSKE. Residues 353-377 traverse the membrane as a helical segment; it reads TLLMGLPTGAVELVGCPLFGILAVY. Over 378 to 389 the chain is Cytoplasmic; it reads AANKKIPFWKYK. A helical membrane pass occupies residues 390–411; it reads LSWAIFAAVLALIASCMLGFAT. Residues 412 to 417 lie on the Extracellular side of the membrane; sequence NSKKAR. A helical transmembrane segment spans residues 418–435; sequence LAGAYLWYISPVSFICVL. Topologically, residues 436-453 are cytoplasmic; sequence SNISANSSGYSKKWTVSS. Residues 454 to 472 form a helical membrane-spanning segment; that stretch reads INLVAYAAANLAGPQTFIA. The Extracellular segment spans residues 473–482; the sequence is KQAPKYHGAK. The helical transmembrane segment at 483-504 threads the bilayer; the sequence is VAMVVCYAVMIVLLSILLIVNL. Residues 505–543 lie on the Cytoplasmic side of the membrane; it reads RENKRRDKIAAERGFPEETENLEFSDLTDFENPNFRYTL.

The protein belongs to the major facilitator superfamily. Allantoate permease family.

It is found in the membrane. Component of the allantoate transport system. This is Allantoate permease (DAL5) from Saccharomyces cerevisiae (strain ATCC 204508 / S288c) (Baker's yeast).